Here is a 147-residue protein sequence, read N- to C-terminus: MFRGNHPTRIDDKGRLKVPADFKREIEDKFQNQTFYVTSFNGKEARLYPMEEWERFEAKLAALPSLNPTRQKLLNVSNYYGQVVEMDGQGRVTIPGLLREAAEIKGEVAVMGFLQYLVVRNAEHLKNEIESAPFTAEDEKTLSDLGI.

2 consecutive SpoVT-AbrB domains span residues N5 to E52 and G81 to H124.

This sequence belongs to the MraZ family. Forms oligomers.

The protein resides in the cytoplasm. It localises to the nucleoid. The polypeptide is Transcriptional regulator MraZ (Koribacter versatilis (strain Ellin345)).